We begin with the raw amino-acid sequence, 667 residues long: Acetoacetyl-CoA synthetase (667 aa).

Belongs to the ATP-dependent AMP-binding enzyme family.

It localises to the cytoplasm. It is found in the cytosol. It catalyses the reaction acetoacetate + ATP + CoA = acetoacetyl-CoA + AMP + diphosphate. Its function is as follows. Converts acetoacetate to acetoacetyl-CoA in the cytosol. Ketone body-utilizing enzyme, responsible for the synthesis of cholesterol and fatty acids. The protein is Acetoacetyl-CoA synthetase (AACS) of Gallus gallus (Chicken).